A 779-amino-acid chain; its full sequence is Pre-mRNA-splicing factor cef-1 (779 aa).

2 consecutive HTH myb-type domains span residues 1-56 (MPVV…DPSI) and 57-106 (KKIE…DEAE). DNA-binding regions (H-T-H motif) lie at residues 29-52 (WARVSSLLARKTPKQCKARWNEWL) and 80-102 (WRTIAPIVGRTANQCLERYQRLL). Disordered stretches follow at residues 113 to 192 (LGLT…ESRR), 246 to 284 (EYQRAHFDPKKQQVGNKRKGEEDERDGKRRKGDKDPSVQ), 424 to 448 (TPLRAAGAGPGATPLRVGQTPLRTP), and 497 to 525 (WELELPDDQQEPKTAEQLEEDAAERDRRE). Positions 127 to 152 (SADDVRKLRPGEVDPDPETKPARPDT) are enriched in basic and acidic residues. Residues 157–204 (EDEKEMLSEARARLANTQGKKAKRKARERQQEESRRLAALQKRRELKT) adopt a coiled-coil conformation. Basic and acidic residues-rich tracts occupy residues 246–256 (EYQRAHFDPKK) and 263–281 (RKGEEDERDGKRRKGDKDP). Positions 653-772 (DEEEEQISTM…EELDALTLNG (120 aa)) form a coiled coil.

It belongs to the CEF1 family. Associated with the spliceosome.

The protein resides in the cytoplasm. It is found in the nucleus. Its function is as follows. Involved in pre-mRNA splicing and cell cycle control. In Neurospora crassa (strain ATCC 24698 / 74-OR23-1A / CBS 708.71 / DSM 1257 / FGSC 987), this protein is Pre-mRNA-splicing factor cef-1 (cef-1).